The sequence spans 81 residues: Cortexin-3 (81 aa).

The chain crosses the membrane as a helical span at residues 29-49 (MTFVFVILLFIFLGILIVRCF).

Belongs to the cortexin family.

The protein resides in the membrane. The chain is Cortexin-3 (CTXN3) from Homo sapiens (Human).